Reading from the N-terminus, the 724-residue chain is Golgin subfamily A member 6-like protein 6 (724 aa).

Disordered regions lie at residues 1–108 (MLMW…HQEA), 314–342 (QEEKIREQEEKMRRQEEMMWEKEEKMRRQ), 374–454 (MHEQ…EMWR), 517–548 (QEEMWREEEKMHEQEKIWEEEKRQEQEDKMWR), and 561–724 (WRQE…MQEH). Over residues 15-29 (LPTHPHLPTHPHLPT) the composition is skewed to basic residues. A compositionally biased stretch (basic and acidic residues) spans 39 to 60 (MSKETRQSKLAEAKEQLTDHHP). 2 stretches are compositionally biased toward polar residues: residues 61-71 (QTNPSVGTAAS) and 79-91 (NNGTNPETTTSGG). A compositionally biased stretch (basic and acidic residues) spans 94–108 (SPEDEQKASHQHQEA). Positions 164 to 686 (ELEQALSAVA…EKMWEQEEKM (523 aa)) form a coiled coil.

Belongs to the GOLGA6 family.

In Homo sapiens (Human), this protein is Golgin subfamily A member 6-like protein 6 (GOLGA6L6).